A 557-amino-acid chain; its full sequence is MKELLYMELAEVYHRLESTTKRLEKTEILAELLRSVDKELLPDVTILMLGRVFPIWSEEELGVGIKLLMKAISLVVGVSMDEIEDEIREQGDIGLASEKLFSRKTQTTFFSQPLTVEFVYSRLKALASASGDRAQSKKINILVEVLSQAKPLEARYITRTVLEELRVGVAEGIIRDAIARAFEVDPALVERAHMLTNDLGMVAAVAREEGEPGLGRLNLEPGRPVKPMLAQLASSIESAITELGRAFCETKYDGIRVQIHRCGDEVSIFTRRLENITAAVPEILEGVEEALPADDYIVEGEIIVTMDGRPASFQYILQRVRRKYDVDRLTREVPLSLFLFDVLYHRGPLIDEPLWHRREVLESILSEIPGRVEASRMVDVGPDNLDDALWLFKESIREGHEGIMIKDTEAPYIPGIRGKKMLKFKAEPETLDLIVVGGTYGRGKRAHLVGSYLLAVRDEKSGELKTIAHVATGLDDQTLQDLSERMENLKVERRGRKIRVKPEIILEVAYSEIVRSPEYESGYSLRFPVVKRIRDDLSPDDIDTLGRVISLFKQGFS.

Glu-249 serves as a coordination point for ATP. Catalysis depends on Lys-251, which acts as the N6-AMP-lysine intermediate. Arg-256, Arg-271, Glu-301, Phe-340, Arg-417, and Lys-423 together coordinate ATP.

Belongs to the ATP-dependent DNA ligase family. The cofactor is Mg(2+).

The catalysed reaction is ATP + (deoxyribonucleotide)n-3'-hydroxyl + 5'-phospho-(deoxyribonucleotide)m = (deoxyribonucleotide)n+m + AMP + diphosphate.. Functionally, DNA ligase that seals nicks in double-stranded DNA during DNA replication, DNA recombination and DNA repair. This Methanothermobacter thermautotrophicus (Methanobacterium thermoformicicum) protein is DNA ligase.